Consider the following 545-residue polypeptide: CTP synthase (545 aa).

Residues 1-266 (MTHFIFVTGG…DDLICERFGF (266 aa)) are amidoligase domain. Ser-13 is a CTP binding site. Position 13 (Ser-13) interacts with UTP. Residues 14–19 (SLGKGI) and Asp-71 each bind ATP. Residues Asp-71 and Glu-140 each contribute to the Mg(2+) site. CTP-binding positions include 147–149 (DIE), 187–192 (KTKPTQ), and Lys-223. UTP is bound by residues 187–192 (KTKPTQ) and Lys-223. An ATP-binding site is contributed by 239 to 241 (KDA). The 252-residue stretch at 292–543 (RVAMVGKYVE…IDAAKTQHQK (252 aa)) folds into the Glutamine amidotransferase type-1 domain. Gly-353 serves as a coordination point for L-glutamine. Catalysis depends on Cys-380, which acts as the Nucleophile; for glutamine hydrolysis. L-glutamine contacts are provided by residues 381 to 384 (LGMQ), Glu-404, and Arg-471. Active-site residues include His-516 and Glu-518.

The protein belongs to the CTP synthase family. In terms of assembly, homotetramer.

The enzyme catalyses UTP + L-glutamine + ATP + H2O = CTP + L-glutamate + ADP + phosphate + 2 H(+). The catalysed reaction is L-glutamine + H2O = L-glutamate + NH4(+). It catalyses the reaction UTP + NH4(+) + ATP = CTP + ADP + phosphate + 2 H(+). It participates in pyrimidine metabolism; CTP biosynthesis via de novo pathway; CTP from UDP: step 2/2. With respect to regulation, allosterically activated by GTP, when glutamine is the substrate; GTP has no effect on the reaction when ammonia is the substrate. The allosteric effector GTP functions by stabilizing the protein conformation that binds the tetrahedral intermediate(s) formed during glutamine hydrolysis. Inhibited by the product CTP, via allosteric rather than competitive inhibition. Catalyzes the ATP-dependent amination of UTP to CTP with either L-glutamine or ammonia as the source of nitrogen. Regulates intracellular CTP levels through interactions with the four ribonucleotide triphosphates. This is CTP synthase from Acinetobacter baumannii (strain ACICU).